A 58-amino-acid chain; its full sequence is Large ribosomal subunit protein bL32 (58 aa).

This sequence belongs to the bacterial ribosomal protein bL32 family.

This Synechococcus sp. (strain WH7803) protein is Large ribosomal subunit protein bL32.